Here is a 3471-residue protein sequence, read N- to C-terminus: MQSFLLSSKNQAKLLHAGLEFVGGVRCAHQGWVSGKAVVFCNYCNFAHRLYRFYTKNHCVLNKETIENLCGRSFVSLYRAGLLLDDFTIDDLLGKGKYAKGSIDNLSIPFDDCALCPNAGTRLSQTGVSHDHFVCNYVEHLFECASFSRETGGKFIRACSKGWHWNATCTTCGASCRFANPRENVVIAIFMNFLRVMYDGNKYYVSLHCDTEWIPVHPLFARLVLMVRGFAPLDNSHVIEEDEMDICGHPSEVTYDDPSNYAFSHQHVTRGVGMGHLAFCRDANGVDRGEHKFYLHGPFDLKMTHAMFRVFMILLNCHGYVQSEFREEHPAVKDRSLCALLSVAGLRGVNIACNEEFIHLHSQFHNGSFRSQRPIPMVYAEPEMYPPLEYVRLTESWVPRGRVMIDDLPSLLSRVYAESSQPHAGEIYEEIFDEDDLFELGDDEGTSTRGLLDLGRRLGGLLLGATKCVKGLHAVIEWPVDVLTKEAEDLGTWLADNKKYVSESTWSCQVCPEVQDALEKSMREQAKLNAQVIGGIKKLATTMDSATSKLKDSLKELERRISVLEQGVDETQQARITNLENFCEDAAKAFDALRADIDALKKKPAQSVTPLPSPSGNSGTAGEQRPPPRRRPPVVEMSEAQAGETVIVGGDEEQEAHQDSSVAAAGPTDEHNAMLQKIYLGSFKWKVSDGGGSILKTFSLPSDIWAANDRMKNFLSYFQYYTCEGMTFTLTITSIGLHGGTLLVAWDALSSATRRGIVSMIQLSNLPSMTLHASGSSIGTLTVTSPAIQHQICTSGSEGSIANLGSLVISVANVLCADSASAQELNVNAWVQFDKPKLSYWTAQHTIAQSGGFEESQDLGDLQAIIATGKWSTTSDKNLMEIIVHPTACYVSEKLIYQTNLSVVAHMFAKWSGSMKYTFVFGASMFDRGKIMVSAVPVQFRNSKLTLSQMAAFPSMVCDLSVETREFTFEVPYISIGKMSLVCKDYLFDISSYNADLVVSRLHVMILDPLVKTGNASNSIGFYVVAGPGKDFKLHQMCGVKSQFAHDVLTAQDFGRSLSCSRLLGNGFKEWCSRESLLMRIPLKNGKKRAFKYAVTPRMRTLPPEATSLSWLSQIFVEWRGSLTYTIHVQSGSAIQHSYMRIWYDPNGKTDEKEIKFLDSAHPPAGIKVYHWDLKIGDSFRFTVPYCARTEKLQIPKAYASTPYEWLTMYNGAVTIDLRSGADMELFVSIAGGDDFEMFEQTVPPKCGSVSDSYTVLSYADDIKSVTEVPNKTTYLADEQPTTSAPRTSTVDTEEDPPTEGEIARTSNGTLVQYRGGAWKPMVERTPTMSKKQVGPELVASDSHMYKCIKNMNKNVKILTDRQCTAKLADIVDSTQGLVGSNSTFVEDLAVGAKQIRKFGESLEVFEGSMSAAKTAELIDNTHAAFSGPADGSPISNVVQLLLPMLSSIKGMSGKMESKMASLTAMFQPCKKAITHLIERSFPYLACKGFKTDKWIWAALASILVGAALLHYYRSDLKFVKKWSVMCMIIWAPLLAEKAYHLGTWIKEKFLKSLPRTRTIKDSCRKHSLAGAFECLASASCAYIKDNWAKTMSSLLTILSVVASLVMWGKIPDDKEITSFADKFHSIGKKGRSITNIIGGFEKITSVCKKWSETLVGWIVSNVSGGIPKEDLAMTAYLGFKIHDWVRETRDMALMENRFQGFGGDEHLVRVRRLYGHSLKIDNALMEKQIVPDMQLSLIIKECRQKCLELMNESYTYKGMKQSRIDPLHVCMLGAPGVGKSTIAHVVINNLLDHRGEPEVDRIYTRCCADAYWSNYHQEPVILYDDLGAIKSNLRLSDYAEIMGIKTNDPFSVPMAAVEDKGKHCTSKYVFSCTNVLNLDDTGDVVTKMAYYRRRNVLVKVERDPDVPKNEANPTEGLVFTVLGHDQNCQGDPQFVVKENWDEPFLREVDTEGWRFERVEYRTFLRFLCMYTDAYMYSQEQVLQGIKTFKMNPFAPEPEFAQAQSGEAAECEIVEETQEIPGEAPQEVKELAKIETAPNMDELVEAFNKLRVTPGHLNEILRDGSGCYIDEWAIAGPRWLSFHELLPFTCGCHHTRVCDFNIVYNNMCKAVRSQSVHFKYRANQAIKYAYTHKLHSQCRYSIDFEKLRECNPLDVFVCVLSKYTADDHSFERRCPKKMNVVRMQRPPVFELKMRPPSDSVVVEDDQGQRAFEWPHLYTFLRYRAIEFKDDKGSLTVREDASADVCPWNEFLKLPWLDGDQLKSVLPAHLHRMVQARLEQVEIMEENGNYSGEMRNAIAEIKEYLDQDHQWVAALVLVACAVKERRKMTHDKLHRKSFNALDRLDKWYTTTAPKTSKKMKILLAIGASVAVAGVAVGAVILLQKTNLFGSKEDEEIEGEEGETQASGAHESDGIVTQHLKRDIRPKMRVTYTDHHVAEAHEEKSTEKPRKPGNPTRKNFLGLSPGFAERGMGVTYEEHTPLKDALLDESNKVFRRKIVASVESAVKQGGKASKDSVLSQISEWQDKVRATGVIAARQLEASGSLKKIHNLNSRRTSSHVMPGLVVHDGTFERSDEVDAELHRITIDEVKSCPKMIKEGVSTLSVKKASVGVLALQKAESQLSFPFTSRAGVDRDLSMTNLIDTHMAGMSCIIISELGNVFRTFGVLRLCGTYVCMPAHYLDEITSEHTLYFVCPSKITQIQLERHRVCLVNGFQETVVWDLGPSVPPSRNYIDFTAKADDWKNYKATSGALVMSKYLVDSMLQCVHFLDSIELTEANVSVPTSYYEANGGIHTIISGLRYRVHCMPGFCGAAIMRADATCYRKIIGMHVSGLRNKCMGYAETLTQEHLMRAIETLKETGLLKHIPRGAIGAGEEKLPEHSKKQSLSLEGKGNLGIVGQLPAQLVPTSVTKTTICKSMIHGLIGEIKTEPSVLSAWDRRLPFPPGEWDPMKDAVKKYGSYILPFPTEEIQEVENFLIKKFRRKENSRRTRNVNSLEVGINGIDGSDFWSPIEMKTSPGYPYILKRPSGAQGKKYLFEELEPYPSGRPKYAMKDPELIENYERIKEEVTSGVKPSIMTMECLKDERRKLAKIYEKPATRTFTILSPEVNILFRQYFGDFAAMVMSTRREHFSQVGINPESMEWSDLINSLLRVNTKGFAGDYSKFDGIGSPAIYHSIVNVVNAWYDDGEVNARARHSLISSIVHRDGICGDLILRYSQGMPSGFAMTVIFNSFVNYYFMALAWMSTVGSSLLSPQGSCKDFDTYCKIVAYGDDNVVSVHEEFLDVYNLQTVAAYLSHFGVTYTDGDKNPIHMSKPYEDITKMSFLKRGFERVESSGFLWKAPLDKTSIEERLNWIRDCPTPVEALEQNIESALHEAAIHGRDYFDDLVQRLNSALKRVMLPPTDISFEECQARWWASVTGDALRAADYSSLVRRASSGHVEFNKKYRDMFRQQDLPLKEILMKSKPVALLDLEV.

Residues 513 to 603 (EVQDALEKSM…RADIDALKKK (91 aa)) adopt a coiled-coil conformation. 2 disordered regions span residues 603–639 (KPAQ…EMSE) and 1271–1307 (NKTT…ARTS). 2 stretches are compositionally biased toward polar residues: residues 606-621 (QSVT…SGTA) and 1271-1291 (NKTT…TSTV). The next 2 helical transmembrane spans lie at 1493–1513 (DKWI…LHYY) and 1592–1612 (MSSL…GKIP). One can recognise an SF3 helicase domain in the interval 1748–1914 (LELMNESYTY…PDVPKNEANP (167 aa)). Residue 1774–1781 (GAPGVGKS) coordinates ATP. Residues 2360 to 2380 (ILLAIGASVAVAGVAVGAVIL) form a helical membrane-spanning segment. Positions 2391–2401 (EDEEIEGEEGE) are enriched in acidic residues. Disordered regions lie at residues 2391-2411 (EDEE…HESD) and 2435-2460 (VAEA…NFLG). Residues 2435–2448 (VAEAHEEKSTEKPR) are compositionally biased toward basic and acidic residues. In terms of domain architecture, Peptidase C3 spans 2629-2847 (GVDRDLSMTN…YAETLTQEHL (219 aa)). Residues H2677, E2714, and C2808 each act as for picornain 3C-like protease activity in the active site. Positions 3152-3283 (TKGFAGDYSK…SVHEEFLDVY (132 aa)) constitute a RdRp catalytic domain.

In terms of processing, specific enzymatic cleavages by picornain 3C-like protease in vivo yield mature proteins. Picornain 3C-like protease is autocatalytically processed.

It is found in the virion. Its subcellular location is the host membrane. It catalyses the reaction RNA(n) + a ribonucleoside 5'-triphosphate = RNA(n+1) + diphosphate. In terms of biological role, picornain 3C-like protease is a thiol protease that probably cleaves the polyprotein. This chain is Genome polyprotein, found in Oryza sativa (Rice).